The chain runs to 107 residues: Regulatory protein SoxS (107 aa).

Residues 8–106 (QDLIAWIDEH…DRTPSDYRHR (99 aa)) enclose the HTH araC/xylS-type domain. 2 consecutive DNA-binding regions (H-T-H motif) follow at residues 25–46 (DVVA…RTVT) and 73–96 (IFDI…RRQF).

Its subcellular location is the cytoplasm. Functionally, transcriptional activator of the superoxide response regulon of E.coli that includes at least 10 genes such as sodA, nfo, zwf and micF. Binds the DNA sequence 5'-GCACN(7)CAA-3'. It also facilitates the subsequent binding of RNA polymerase to the micF and the nfo promoters. In Escherichia coli O157:H7, this protein is Regulatory protein SoxS (soxS).